A 321-amino-acid polypeptide reads, in one-letter code: uncharacterized protein (321 aa).

This is an uncharacterized protein from Acanthamoeba polyphaga (Amoeba).